The following is a 193-amino-acid chain: Deoxycytidylate deaminase (193 aa).

One can recognise a CMP/dCMP-type deaminase domain in the interval 1–171; the sequence is MKASTVLQIA…DILRNAGIEV (171 aa). Positions 19, 49, 94, 102, and 104 each coordinate Zn(2+). The Proton donor role is filled by Glu-106. Zn(2+) is bound by residues Cys-132 and Cys-135. Tyr-153 provides a ligand contact to substrate.

This sequence belongs to the cytidine and deoxycytidylate deaminase family. In terms of assembly, homohexamer. Requires Zn(2+) as cofactor.

It catalyses the reaction dCMP + H2O + H(+) = dUMP + NH4(+). Allosteric enzyme whose activity is greatly influenced by the end products of its metabolic pathway, dCTP and dTTP. Functionally, supplies the nucleotide substrate for thymidylate synthetase. This is Deoxycytidylate deaminase (CD) from Escherichia coli (Bacteriophage T4).